Here is a 32-residue protein sequence, read N- to C-terminus: Photosystem II reaction center protein Z (32 aa).

Residues 9-31 (FILIGSASWAALVLLVGSLNSFV) form a helical membrane-spanning segment.

Belongs to the PsbZ family. In terms of assembly, PSII is composed of 1 copy each of membrane proteins PsbA, PsbB, PsbC, PsbD, PsbE, PsbF, PsbH, PsbI, PsbJ, PsbK, PsbL, PsbM, PsbT, PsbY, PsbZ, Psb30/Ycf12, at least 3 peripheral proteins of the oxygen-evolving complex and a large number of cofactors. It forms dimeric complexes.

Its subcellular location is the plastid. The protein localises to the chloroplast thylakoid membrane. Its function is as follows. May control the interaction of photosystem II (PSII) cores with the light-harvesting antenna, regulates electron flow through the 2 photosystem reaction centers. PSII is a light-driven water plastoquinone oxidoreductase, using light energy to abstract electrons from H(2)O, generating a proton gradient subsequently used for ATP formation. The protein is Photosystem II reaction center protein Z of Euglena viridis (Cercaria viridis).